The primary structure comprises 426 residues: Enolase (426 aa).

Glutamine 163 lines the (2R)-2-phosphoglycerate pocket. Glutamate 205 acts as the Proton donor in catalysis. Residues aspartate 242, glutamate 286, and aspartate 313 each coordinate Mg(2+). Positions 338, 367, 368, and 389 each coordinate (2R)-2-phosphoglycerate. The Proton acceptor role is filled by lysine 338.

The protein belongs to the enolase family. Mg(2+) serves as cofactor.

The protein localises to the cytoplasm. Its subcellular location is the secreted. It is found in the cell surface. It catalyses the reaction (2R)-2-phosphoglycerate = phosphoenolpyruvate + H2O. It participates in carbohydrate degradation; glycolysis; pyruvate from D-glyceraldehyde 3-phosphate: step 4/5. In terms of biological role, catalyzes the reversible conversion of 2-phosphoglycerate (2-PG) into phosphoenolpyruvate (PEP). It is essential for the degradation of carbohydrates via glycolysis. The chain is Enolase from Helicobacter pylori (strain P12).